Reading from the N-terminus, the 705-residue chain is Polyribonucleotide nucleotidyltransferase (705 aa).

Residues aspartate 486 and aspartate 492 each contribute to the Mg(2+) site. Residues 553–612 (PRIYTMKINPEKIKDVIGKGGSVIRALTDETGTTIEIEDDGTIKIAATDGDKAKHAIRRI) form the KH domain. In terms of domain architecture, S1 motif spans 622–690 (GRIYAGKVTR…RQGRIRLSIK (69 aa)).

It belongs to the polyribonucleotide nucleotidyltransferase family. As to quaternary structure, component of the RNA degradosome, which is a multiprotein complex involved in RNA processing and mRNA degradation. Mg(2+) serves as cofactor.

It localises to the cytoplasm. It catalyses the reaction RNA(n+1) + phosphate = RNA(n) + a ribonucleoside 5'-diphosphate. Involved in mRNA degradation. Catalyzes the phosphorolysis of single-stranded polyribonucleotides processively in the 3'- to 5'-direction. The chain is Polyribonucleotide nucleotidyltransferase from Yersinia pseudotuberculosis serotype O:3 (strain YPIII).